The sequence spans 264 residues: 3-methyl-2-oxobutanoate hydroxymethyltransferase (264 aa).

Positions 45 and 84 each coordinate Mg(2+). 3-methyl-2-oxobutanoate is bound by residues aspartate 45 to serine 46, aspartate 84, and lysine 112. Glutamate 114 lines the Mg(2+) pocket. Glutamate 181 functions as the Proton acceptor in the catalytic mechanism.

Belongs to the PanB family. In terms of assembly, homodecamer; pentamer of dimers. The cofactor is Mg(2+).

The protein resides in the cytoplasm. It carries out the reaction 3-methyl-2-oxobutanoate + (6R)-5,10-methylene-5,6,7,8-tetrahydrofolate + H2O = 2-dehydropantoate + (6S)-5,6,7,8-tetrahydrofolate. It functions in the pathway cofactor biosynthesis; (R)-pantothenate biosynthesis; (R)-pantoate from 3-methyl-2-oxobutanoate: step 1/2. Its function is as follows. Catalyzes the reversible reaction in which hydroxymethyl group from 5,10-methylenetetrahydrofolate is transferred onto alpha-ketoisovalerate to form ketopantoate. The chain is 3-methyl-2-oxobutanoate hydroxymethyltransferase from Shewanella putrefaciens (strain CN-32 / ATCC BAA-453).